The following is a 205-amino-acid chain: Penta-EF hand domain-containing protein 2 (205 aa).

3 EF-hand domains span residues 45-75, 76-111, and 119-141; these read EMQS…GGTP, LGIE…INNL, and DRNF…SGFQ. Asp54, Asn56, Ser58, Thr60, Glu65, Asp89, Asn91, Asn93, Gln95, and Glu100 together coordinate Ca(2+).

This sequence belongs to the Peflin/Sorcin family. In contrast to pefA, does not form homodimers in presence of Ca(2+). May form heterodimers with pefA.

It localises to the cytoplasm. The protein localises to the membrane. The polypeptide is Penta-EF hand domain-containing protein 2 (pefB) (Dictyostelium discoideum (Social amoeba)).